Consider the following 856-residue polypeptide: DNA mismatch repair protein MutS (856 aa).

An ATP-binding site is contributed by 609–616 (GPNMSGKS).

Belongs to the DNA mismatch repair MutS family.

Functionally, this protein is involved in the repair of mismatches in DNA. It is possible that it carries out the mismatch recognition step. This protein has a weak ATPase activity. This chain is DNA mismatch repair protein MutS, found in Finegoldia magna (strain ATCC 29328 / DSM 20472 / WAL 2508) (Peptostreptococcus magnus).